The sequence spans 1242 residues: Phosphorylase b kinase regulatory subunit alpha, skeletal muscle isoform (1242 aa).

Serine 630, serine 731, serine 737, serine 740, serine 760, serine 813, serine 974, serine 983, and serine 987 each carry phosphoserine. Residues 812-842 (LSELYVKVGEIRHWGLIRYISGILRKKVEAL) are calmodulin-binding. Serine 1009 bears the Phosphoserine; by autocatalysis mark. Serine 1020 is subject to Phosphoserine; by PKA. Phosphoserine occurs at positions 1022 and 1025. Residues 1065-1105 (SKDSRQGQWQRRRRLDGALNRVPIGFYQKVWKILQKCHGLS) are calmodulin-binding. Serine 1132 is modified (phosphoserine). Residue cysteine 1239 is the site of S-farnesyl cysteine attachment.

Belongs to the phosphorylase b kinase regulatory chain family. In terms of assembly, hexadecamer of 4 heterotetramers, each composed of alpha, beta, gamma, and delta subunits. Alpha (PHKA1 or PHKA2) and beta (PHKB) are regulatory subunits, gamma (PHKG1 or PHKG2) is the catalytic subunit, and delta is calmodulin. Although the final Cys may be farnesylated, the terminal tripeptide is probably not removed, and the C-terminus is not methylated.

The protein localises to the cell membrane. The protein operates within glycan biosynthesis; glycogen metabolism. By phosphorylation of various serine residues and by calcium. Phosphorylase b kinase catalyzes the phosphorylation of serine in certain substrates, including troponin I. The alpha chain may bind calmodulin. This chain is Phosphorylase b kinase regulatory subunit alpha, skeletal muscle isoform (Phka1), found in Rattus norvegicus (Rat).